The chain runs to 750 residues: MKFGKDFVRQMIPEWQQAYMDYAGLKSILQEIQTSRKRSERPGILKRKLSGSRNFSGLTKRYSRTASTREPEIQDILVHATTGDDGFERYETTILEVAEAGRESELAFFKTLDLEFDKVNHFYRSKVEEMVKEAVVLNKQMDALIAFRIKVERPSSSWSCSETVSVDMNALDSNDQRNTLAEEMGIRVEGNGSNGGDSTKESVPQVLSVLERIRLNKTQETPLSTIKNVLKLSNQEELKFTRENLKKIEERLKNVFIEFYRKLRHLKNYSFLNTLAISKIMKKYDKIASRSAAKPYMEMVDKSYLTSSDEINKLMLRVESTFVEHFAGLNRSKGMNLLRPKVKKEKHRITFSTGFFVGCTVSLVVALVMFIHARNIMGAVGHKVYMETMFPLYSLFAFVVLHMIMYASNIYFWKRYRVNYPFIFGFKEGTELGYRHVLLLSFGLGTLALCAVLINLDMEMDPNTNDYKTMTELLPMFILALVVAILFCPFNIFYRSSRVFFLMVVFRCIAAPLYKVNLPDFFLADQLTSQVQALRSLEFYICYYGWGDFKHRQNTCRSSDVYSTFYFIVAVIPYWSRFLQCVRRLIEENDSSQGYNALKYLLTVVAVCLRTAYSFNRGNIWKISAWVFSALATFYGTYWDIVFDWGLLHRPSKHLLREKLLVPHKAVYYVAIVLNIVLRMAWLQTVLDFNLSFLHRETMIALLAALEIIRRGIWNFFRLENEHLNNVGKFRAFKSVPLPFNYNEEEDRDS.

An SPX domain is found at 1 to 298 (MKFGKDFVRQ…SRSAAKPYME (298 aa)). Topologically, residues 1-350 (MKFGKDFVRQ…KVKKEKHRIT (350 aa)) are cytoplasmic. Residues 351 to 371 (FSTGFFVGCTVSLVVALVMFI) form a helical membrane-spanning segment. Residues 372 to 391 (HARNIMGAVGHKVYMETMFP) lie on the Extracellular side of the membrane. A helical transmembrane segment spans residues 392–412 (LYSLFAFVVLHMIMYASNIYF). Residues 413–435 (WKRYRVNYPFIFGFKEGTELGYR) are Cytoplasmic-facing. The chain crosses the membrane as a helical span at residues 436–456 (HVLLLSFGLGTLALCAVLINL). The Extracellular portion of the chain corresponds to 457-472 (DMEMDPNTNDYKTMTE). Residues 473-493 (LLPMFILALVVAILFCPFNIF) form a helical membrane-spanning segment. The Cytoplasmic segment spans residues 494–622 (YRSSRVFFLM…YSFNRGNIWK (129 aa)). Residues 557-750 (RSSDVYSTFY…NYNEEEDRDS (194 aa)) form the EXS domain. The helical transmembrane segment at 623 to 643 (ISAWVFSALATFYGTYWDIVF) threads the bilayer. Residues 644–666 (DWGLLHRPSKHLLREKLLVPHKA) lie on the Extracellular side of the membrane. The helical transmembrane segment at 667-687 (VYYVAIVLNIVLRMAWLQTVL) threads the bilayer. Over 688–750 (DFNLSFLHRE…NYNEEEDRDS (63 aa)) the chain is Cytoplasmic.

It belongs to the SYG1 (TC 2.A.94) family. In terms of tissue distribution, expressed in root tips, vascular cylinders of roots and filaments, leaf hydathodes, stem, receptacle and stigma apex.

Its subcellular location is the cell membrane. In terms of biological role, may transport inorganic phosphate (Pi). The protein is Phosphate transporter PHO1 homolog 7 (PHO1-H7) of Arabidopsis thaliana (Mouse-ear cress).